A 390-amino-acid polypeptide reads, in one-letter code: Neuromedin-B receptor (390 aa).

Residues 1-41 (MPPRSLSNLSFPTEANESELVPEVWEKDFLPDSDGTTAELV) are Extracellular-facing. 2 N-linked (GlcNAc...) asparagine glycosylation sites follow: asparagine 8 and asparagine 16. The chain crosses the membrane as a helical span at residues 42-65 (IRCVIPSLYLIIISVGLLGNIMLV). Over 66 to 79 (KIFLTNSAMRNVPN) the chain is Cytoplasmic. A helical membrane pass occupies residues 80-99 (IFISNLAAGDLLLLLTCVPV). The Extracellular segment spans residues 100 to 117 (DASRYFFDEWVFGKLGCK). An intrachain disulfide couples cysteine 116 to cysteine 198. Residues 118 to 139 (LIPAIQLTSVGVSVFTLTALSA) form a helical membrane-spanning segment. Topologically, residues 140–156 (DRYRAIVNPMDMQTSGV) are cytoplasmic. A helical transmembrane segment spans residues 157-177 (LLWTSLKAVGIWVVSVLLAVP). The Extracellular portion of the chain corresponds to 178 to 211 (EAVFSEVARIGSLDNSSFTACIPYPQTDELHPKI). N-linked (GlcNAc...) asparagine glycosylation occurs at asparagine 192. Residues 212 to 235 (HSVLIFLVYFLIPLVIISIYYYHI) form a helical membrane-spanning segment. At 236-266 (AKTLIKSAHNLPGEYNEHTKKQMETRKRLAK) the chain is on the cytoplasmic side. Residues 267 to 287 (IVLVFVGCFVFCWFPNHVLYL) form a helical membrane-spanning segment. At 288–299 (YRSFNYKEIDPS) the chain is on the extracellular side. The helical transmembrane segment at 300–327 (LGHMIVTLVARVLSFSNSCVNPFALYLL) threads the bilayer. Residues 328–390 (SESFRKHFNS…GHSTKQEIAL (63 aa)) lie on the Cytoplasmic side of the membrane. Cysteine 341 carries S-palmitoyl cysteine lipidation. The residue at position 352 (serine 352) is a Phosphoserine.

Belongs to the G-protein coupled receptor 1 family. Expressed in a subset of neurons of the pre-Botzinger complex. Within the pre-Botzinger complex, there is some overlap with neurons expressing Grpr with some cells expressing only Grpr or Nmbr while some cells express both. Expressed in dorsal root ganglion neurons and mast cells. Expressed in lung.

The protein resides in the cell membrane. In terms of biological role, receptor for neuromedin-B. Contributes to the maintenance of basal sigh rate through signaling in the pre-Botzinger complex, a cluster of several thousand neurons in the ventrolateral medulla responsible for inspiration during respiratory activity. Contributes to the induction of sneezing following exposure to chemical irritants or allergens which causes release of NMB by nasal sensory neurons and activation of NMBR-expressing neurons in the sneeze-evoking region of the brainstem. These in turn activate neurons of the caudal ventral respiratory group, giving rise to the sneezing response. Contributes to induction of acute itch, possibly through its activation on dorsal root ganglion neurons by the NMB peptide. Plays a role in the innate immune response to influenza A virus infection by enhancing interferon alpha expression and reducing expression of IL6. Plays a role in CSF1-induced proliferation of osteoclast precursors by contributing to the positive regulation of the expression of the CSF1 receptor CSF1R. This Mus musculus (Mouse) protein is Neuromedin-B receptor (Nmbr).